Consider the following 591-residue polypeptide: MSSKRPSTDGRRDLANGSLSSSPEEMSGAEEGRETSSGIEVEASDLSLSLTGDDGGPNRTSTESRGTDTESSGEEKDSDSMEDTGHYSINDENRVHGHSDEEEEEEQPRHRVQRKRASRDQDSSDDERALEDWVSSETTALPRPRWQALPALRERELGSSARFVYEACGARVFVQRFRLQHGLEGHTGCVNTLHFNQRGTWLASGSDDLKVVVWDWVRRQPVLDFESGHKSNVFQAKFLPNSGDSTLAMCARDGQVRVAELSATQCCKNTKRVAQHKGASHKLALEPDSPCTFLSAGEDAVVFTIDLRQDRPASKLVVTKEKEKKVGLYTIYVNPANTHQFAVGGRDQFVRIYDQRKIDENENNGVLKKFCPHHLVNSESKANITCLVYSHDGTELLASYNDEDIYLFNSSHSDGAQYIKRYKGHRNNATVKGVNFYGPKSEFVVSGSDCGHIFLWEKSSCQIIQFMEGDKGGVVNCLEPHPHLPVLATSGLDHDVKIWAPTAEASTELTGLKDVIKKNKRERDEDSLHHTDLFDSHMLWFLMHHLRQRRHHRRWREPGVGATDADSDESPSSSDTSDEEEGPDRVQCMPS.

Residues 1–14 show a composition bias toward basic and acidic residues; it reads MSSKRPSTDGRRDL. Residues 1-140 form a disordered region; sequence MSSKRPSTDG…EDWVSSETTA (140 aa). Serine 21 and serine 22 each carry phosphoserine. Residues 39–50 carry the Nuclear export signal motif; that stretch reads IEVEASDLSLSL. Composition is skewed to basic and acidic residues over residues 65 to 99 and 118 to 131; these read RGTDTESSGEEKDSDSMEDTGHYSINDENRVHGHS and SRDQDSSDDERALE. Serine 99, serine 123, and serine 124 each carry phosphoserine. WD repeat units follow at residues 185–224, 228–269, 275–315, 323–363, 379–418, 426–466, and 470–509; these read GHTGCVNTLHFNQRGTWLASGSDDLKVVVWDWVRRQPVLD, GHKS…CCKN, QHKG…PASK, EKKV…ENEN, ESKANITCLVYSHDGTELLASYNDEDIYLFNSSHSDGAQY, RNNA…IIQF, and DKGGVVNCLEPHPHLPVLATSGLDHDVKIWAPTAEASTEL. The residue at position 198 (arginine 198) is an Omega-N-methylarginine; by PRMT1. Positions 552–591 are disordered; that stretch reads HRRWREPGVGATDADSDESPSSSDTSDEEEGPDRVQCMPS.

Belongs to the WD repeat DCAF8 family. Interacts with DDB1, CUL4A and CUL4B. Interacts with KPNA1, KPNB1 and XPO1.

It is found in the nucleus. Its subcellular location is the cytoplasm. Its pathway is protein modification; protein ubiquitination. In terms of biological role, may function as a substrate receptor for CUL4-DDB1 E3 ubiquitin-protein ligase complex. This Rattus norvegicus (Rat) protein is DDB1- and CUL4-associated factor 8 (Dcaf8).